The sequence spans 323 residues: Arginase (323 aa).

Mn(2+) is bound by residues His119, Asp142, His144, and Asp146. Substrate contacts are provided by residues His144–Asn148, Ser155–Asn157, and Asp198. Residues Asp247 and Asp249 each coordinate Mn(2+). Substrate-binding residues include Thr261 and Glu292.

Belongs to the arginase family. As to quaternary structure, homotrimer. Mn(2+) is required as a cofactor.

It catalyses the reaction L-arginine + H2O = urea + L-ornithine. The protein operates within nitrogen metabolism; urea cycle; L-ornithine and urea from L-arginine: step 1/1. In Schizosaccharomyces pombe (strain 972 / ATCC 24843) (Fission yeast), this protein is Arginase (car1).